Reading from the N-terminus, the 217-residue chain is Cysteine-rich protein 3 (217 aa).

The region spanning 3–64 is the LIM zinc-binding 1 domain; it reads WTCPRCQQPV…KPCYGALFGP (62 aa). Positions 84 to 112 are disordered; the sequence is PGCTTPLSPSSFSPPRPRTGLPQGKKSPP. The region spanning 122–183 is the LIM zinc-binding 2 domain; that stretch reads SLCPGCGEPV…VPCYGYLFGP (62 aa).

As to expression, expressed in most tissues, but not in skeletal muscle.

The protein localises to the cytoplasm. In Homo sapiens (Human), this protein is Cysteine-rich protein 3 (CRIP3).